Reading from the N-terminus, the 209-residue chain is ATP-dependent Clp protease proteolytic subunit (209 aa).

Ser-106 serves as the catalytic Nucleophile. The active site involves His-131.

It belongs to the peptidase S14 family. In terms of assembly, fourteen ClpP subunits assemble into 2 heptameric rings which stack back to back to give a disk-like structure with a central cavity, resembling the structure of eukaryotic proteasomes.

The protein resides in the cytoplasm. It carries out the reaction Hydrolysis of proteins to small peptides in the presence of ATP and magnesium. alpha-casein is the usual test substrate. In the absence of ATP, only oligopeptides shorter than five residues are hydrolyzed (such as succinyl-Leu-Tyr-|-NHMec, and Leu-Tyr-Leu-|-Tyr-Trp, in which cleavage of the -Tyr-|-Leu- and -Tyr-|-Trp bonds also occurs).. Its function is as follows. Cleaves peptides in various proteins in a process that requires ATP hydrolysis. Has a chymotrypsin-like activity. Plays a major role in the degradation of misfolded proteins. This chain is ATP-dependent Clp protease proteolytic subunit, found in Brucella melitensis biotype 2 (strain ATCC 23457).